We begin with the raw amino-acid sequence, 308 residues long: Aspartate carbamoyltransferase catalytic subunit (308 aa).

Positions 51 and 52 each coordinate carbamoyl phosphate. An L-aspartate-binding site is contributed by Lys-79. Residues Arg-101, His-130, and Gln-133 each coordinate carbamoyl phosphate. L-aspartate is bound by residues Arg-163 and Arg-215. Carbamoyl phosphate is bound by residues Ala-258 and Pro-259.

It belongs to the aspartate/ornithine carbamoyltransferase superfamily. ATCase family. As to quaternary structure, heterododecamer (2C3:3R2) of six catalytic PyrB chains organized as two trimers (C3), and six regulatory PyrI chains organized as three dimers (R2).

The enzyme catalyses carbamoyl phosphate + L-aspartate = N-carbamoyl-L-aspartate + phosphate + H(+). It participates in pyrimidine metabolism; UMP biosynthesis via de novo pathway; (S)-dihydroorotate from bicarbonate: step 2/3. Its function is as follows. Catalyzes the condensation of carbamoyl phosphate and aspartate to form carbamoyl aspartate and inorganic phosphate, the committed step in the de novo pyrimidine nucleotide biosynthesis pathway. This Pediococcus pentosaceus (strain ATCC 25745 / CCUG 21536 / LMG 10740 / 183-1w) protein is Aspartate carbamoyltransferase catalytic subunit.